A 241-amino-acid polypeptide reads, in one-letter code: ATP synthase subunit a (241 aa).

5 consecutive transmembrane segments (helical) span residues 30 to 50 (GQVF…ISLG), 91 to 111 (FIGT…LIPW), 128 to 148 (INTT…AGLS), 193 to 213 (LVVG…VMFL), and 214 to 234 (GLFT…YYIG).

It belongs to the ATPase A chain family. F-type ATPases have 2 components, CF(1) - the catalytic core - and CF(0) - the membrane proton channel. CF(1) has five subunits: alpha(3), beta(3), gamma(1), delta(1), epsilon(1). CF(0) has four main subunits: a, b, b' and c.

It localises to the cellular thylakoid membrane. Its function is as follows. Key component of the proton channel; it plays a direct role in the translocation of protons across the membrane. This is ATP synthase subunit a from Prochlorococcus marinus (strain MIT 9515).